We begin with the raw amino-acid sequence, 63 residues long: Sperm protamine P1 (63 aa).

The tract at residues M1–Y63 is disordered.

The protein belongs to the protamine P1 family. Testis.

It is found in the nucleus. It localises to the chromosome. In terms of biological role, protamines substitute for histones in the chromatin of sperm during the haploid phase of spermatogenesis. They compact sperm DNA into a highly condensed, stable and inactive complex. The sequence is that of Sperm protamine P1 (PRM1) from Phascogale tapoatafa (Common wambenger).